The primary structure comprises 213 residues: Ion-translocating oxidoreductase complex subunit A (213 aa).

Topologically, residues 1–24 (MLLLWQSRIMPGSEANIYITMTEY) are periplasmic. Residues 25–45 (LLLLIGTVLVNNFVLVKFLGL) traverse the membrane as a helical segment. The Cytoplasmic portion of the chain corresponds to 46–58 (CPFMGVSKKLETA). Residues 59 to 79 (IGMGLATTFVLTLASVCAYLV) form a helical membrane-spanning segment. Over 80-86 (ESYVLRP) the chain is Periplasmic. A helical transmembrane segment spans residues 87–107 (LGIEYLRTMSFILVIAVVVQF). The Cytoplasmic segment spans residues 108–121 (TEMVVHKTSPTLYR). A helical membrane pass occupies residues 122-142 (LLGIFLPLITTNCAVLGVALL). Over 143-153 (NINENHNFIQS) the chain is Periplasmic. A helical transmembrane segment spans residues 154 to 174 (IIYGFGAAVGFSLVLILFASM). The Cytoplasmic portion of the chain corresponds to 175–190 (RERIHVADVPAPFKGA). The chain crosses the membrane as a helical span at residues 191-211 (SIAMITAGLMSLAFMGFTGLV). The Periplasmic portion of the chain corresponds to 212–213 (KL).

This sequence belongs to the NqrDE/RnfAE family. In terms of assembly, the complex is composed of six subunits: RnfA, RnfB, RnfC, RnfD, RnfE and RnfG.

The protein localises to the cell inner membrane. In terms of biological role, part of a membrane-bound complex that couples electron transfer with translocation of ions across the membrane. This is Ion-translocating oxidoreductase complex subunit A from Vibrio cholerae serotype O1 (strain ATCC 39541 / Classical Ogawa 395 / O395).